The chain runs to 93 residues: Small ribosomal subunit protein uS19c (93 aa).

This sequence belongs to the universal ribosomal protein uS19 family.

Its subcellular location is the plastid. It localises to the chloroplast. In terms of biological role, protein S19 forms a complex with S13 that binds strongly to the 16S ribosomal RNA. This chain is Small ribosomal subunit protein uS19c, found in Zygnema circumcarinatum (Green alga).